The chain runs to 274 residues: DNA-directed RNA polymerase subunit Rpo3 (274 aa).

Residues Cys-202, Cys-205, and Cys-208 each contribute to the [3Fe-4S] cluster site.

It belongs to the archaeal Rpo3/eukaryotic RPB3 RNA polymerase subunit family. Part of the RNA polymerase complex. [3Fe-4S] cluster is required as a cofactor.

The protein resides in the cytoplasm. The catalysed reaction is RNA(n) + a ribonucleoside 5'-triphosphate = RNA(n+1) + diphosphate. Its function is as follows. DNA-dependent RNA polymerase (RNAP) catalyzes the transcription of DNA into RNA using the four ribonucleoside triphosphates as substrates. The sequence is that of DNA-directed RNA polymerase subunit Rpo3 from Methanobrevibacter smithii (strain ATCC 35061 / DSM 861 / OCM 144 / PS).